The chain runs to 461 residues: Bifunctional protein GlmU (461 aa).

The interval 1–229 is pyrophosphorylase; the sequence is MLKKEINVVI…CKEILGVNNK (229 aa). UDP-N-acetyl-alpha-D-glucosamine is bound by residues 11–14, Lys25, Gln76, 81–82, 103–105, Gly140, Glu154, and Asn227; these read LAAG, GT, and YGD. Asp105 is a binding site for Mg(2+). Asn227 is a Mg(2+) binding site. Residues 230 to 250 form a linker region; that stretch reads LQLSILEKIFRKKQVNDLLLS. The segment at 251-461 is N-acetyltransferase; sequence GVTLKDPNHF…PQKIIKKTDQ (211 aa). Arg333 and Lys351 together coordinate UDP-N-acetyl-alpha-D-glucosamine. Residue His363 is the Proton acceptor of the active site. Positions 366 and 377 each coordinate UDP-N-acetyl-alpha-D-glucosamine. Acetyl-CoA is bound by residues Ala380, 386–387, and Ala423; that span reads NY.

In the N-terminal section; belongs to the N-acetylglucosamine-1-phosphate uridyltransferase family. It in the C-terminal section; belongs to the transferase hexapeptide repeat family. As to quaternary structure, homotrimer. The cofactor is Mg(2+).

Its subcellular location is the cytoplasm. It carries out the reaction alpha-D-glucosamine 1-phosphate + acetyl-CoA = N-acetyl-alpha-D-glucosamine 1-phosphate + CoA + H(+). The enzyme catalyses N-acetyl-alpha-D-glucosamine 1-phosphate + UTP + H(+) = UDP-N-acetyl-alpha-D-glucosamine + diphosphate. Its pathway is nucleotide-sugar biosynthesis; UDP-N-acetyl-alpha-D-glucosamine biosynthesis; N-acetyl-alpha-D-glucosamine 1-phosphate from alpha-D-glucosamine 6-phosphate (route II): step 2/2. It participates in nucleotide-sugar biosynthesis; UDP-N-acetyl-alpha-D-glucosamine biosynthesis; UDP-N-acetyl-alpha-D-glucosamine from N-acetyl-alpha-D-glucosamine 1-phosphate: step 1/1. The protein operates within bacterial outer membrane biogenesis; LPS lipid A biosynthesis. Functionally, catalyzes the last two sequential reactions in the de novo biosynthetic pathway for UDP-N-acetylglucosamine (UDP-GlcNAc). The C-terminal domain catalyzes the transfer of acetyl group from acetyl coenzyme A to glucosamine-1-phosphate (GlcN-1-P) to produce N-acetylglucosamine-1-phosphate (GlcNAc-1-P), which is converted into UDP-GlcNAc by the transfer of uridine 5-monophosphate (from uridine 5-triphosphate), a reaction catalyzed by the N-terminal domain. This chain is Bifunctional protein GlmU, found in Buchnera aphidicola subsp. Schizaphis graminum (strain Sg).